The chain runs to 116 residues: UPF0102 protein ELI_05985 (116 aa).

The protein belongs to the UPF0102 family.

This is UPF0102 protein ELI_05985 from Erythrobacter litoralis (strain HTCC2594).